The chain runs to 502 residues: MEEFQVYLELNRSRRHDFLYPLIFREYIYALAHDHGLNKSMIFLENQGYGNKFSSLIVKRLIIRMDQQNHLIISANDXNQNPFFGHNNNLYSQMISAGFAVIVEIPFSLRLVSYSQGEEVAKSHNLQSIHSIFPFLEDKFSHLNYVLDVLIPHPIHLEILVQALRYWVKDASSLHLLRFSLYEYCNLKSFITPKKSISIFNPRLFLFLYNSHVCEYESIFLFLRNQSSHLRSTSSGVFLERIYFYGKIEYLVEVFYNDFQNNLWLFKDPFIHFIRYQGKAILASKDTSLLMNKWKYYFVDLWQYYFYMWSQSGRVRINQLSKYSLDFLGYLSSVRLNPSVVRSQMLENSFIIDNAMKKLDTRIPIISLIGSLSKAKFCNTLGHPISKPTWADSSDSDIIDRFVRICRNLSHYHSGSSKKKSLYRIKYILRLSCVKTLARKHKSTVRAFLKRLGSEFLEEFFTEEEHVFSLIFPKVFFTSRKLYRGRIWYLDIICINALVNHE.

The protein belongs to the intron maturase 2 family. MatK subfamily.

The protein resides in the plastid. It is found in the chloroplast. In terms of biological role, usually encoded in the trnK tRNA gene intron. Probably assists in splicing its own and other chloroplast group II introns. The polypeptide is Maturase K (Tilia americana (American basswood)).